Here is a 224-residue protein sequence, read N- to C-terminus: Heme response regulator HssR (224 aa).

The 114-residue stretch at 3–116 (KCLIVDDDYK…ELLFRIQAVL (114 aa)) folds into the Response regulatory domain. Aspartate 52 is subject to 4-aspartylphosphate. The segment at residues 124–222 (QDIIKLGNVT…VRGQGYRVIT (99 aa)) is a DNA-binding region (ompR/PhoB-type).

Phosphorylated by HssS.

It localises to the cytoplasm. Functionally, member of the two-component regulatory system HssS/HssR involved in intracellular heme homeostasis and tempering of staphylococcal virulence. Phosphorylated HssR binds to a direct repeat sequence within hrtAB promoter and activates the expression of hrtAB, an efflux pump, in response to extracellular heme, hemin, hemoglobin or blood. This Staphylococcus haemolyticus (strain JCSC1435) protein is Heme response regulator HssR (hssR).